Consider the following 584-residue polypeptide: Endoribonuclease YBEY, chloroplastic (584 aa).

A chloroplast-targeting transit peptide spans 1-50; the sequence is MLSRVCPTLRYNRIWSAHAREMPRATLLLLQPNFFHSSPKTALVNRLDVT. Zn(2+) is bound by residues histidine 240, histidine 244, and histidine 250.

Belongs to the endoribonuclease YbeY family. Requires Zn(2+) as cofactor.

The protein resides in the plastid. The protein localises to the chloroplast stroma. Its function is as follows. Endoribonuclease required for chloroplast ribosomal RNA (rRNA) processing and essential for normal growth and development. May be involved in maturation of both the 5' and 3' ends of 16S, 23S, and 4.5S rRNAs. Cleaves chloroplast rRNAs, mRNAs and tRNAs in vitro. This Arabidopsis thaliana (Mouse-ear cress) protein is Endoribonuclease YBEY, chloroplastic.